A 348-amino-acid polypeptide reads, in one-letter code: MAGKADLGHTGISDNIVERQIFVPQPNNAWSFTQGLMCGQASVVVVLLVFIKFFVFSEAPPSSGAAKSKKKDISGVIVKREAKNTDDDDGVENGDSAKLATILEKTYYDVNNHNPESLDWFNVLIAQTISQLRCEALLSDNIYHSLNDFLETSDLPDFMDKITLTEIDIGDDFPIFSNCRIQHSADGTGRLEAKIDVDLSDTLTLGIETRLLLNHPRPLTAVLPVQLTVSMVRFSGCLTVSLVNTNDTDFVGTSKEENSSGGGTALMFSFSPDYRLEFSVKSLIGSRTKLQDVPKISDLVDSKLRNWFSDRCVEPKFQVVRLPSMWPRSKNTREPVGAGKTEKVNGNE.

At 1-35 the chain is on the lumenal side; it reads MAGKADLGHTGISDNIVERQIFVPQPNNAWSFTQG. A helical membrane pass occupies residues 36–56; sequence LMCGQASVVVVLLVFIKFFVF. Residues 57–348 lie on the Cytoplasmic side of the membrane; that stretch reads SEAPPSSGAA…GKTEKVNGNE (292 aa). The SMP-LTD domain occupies 114 to 323; the sequence is NPESLDWFNV…EPKFQVVRLP (210 aa). Residues 328 to 348 are disordered; that stretch reads RSKNTREPVGAGKTEKVNGNE.

The protein belongs to the MMM1 family. As to quaternary structure, homodimer. Component of the ER-mitochondria encounter structure (ERMES) or MDM complex, composed of MMM1, MDM10, MDM12 and MDM34. An MMM1 homodimer associates with one molecule of MDM12 on each side in a pairwise head-to-tail manner, and the SMP-LTD domains of MMM1 and MDM12 generate a continuous hydrophobic tunnel for phospholipid trafficking.

The protein resides in the endoplasmic reticulum membrane. Functionally, component of the ERMES/MDM complex, which serves as a molecular tether to connect the endoplasmic reticulum (ER) and mitochondria. Components of this complex are involved in the control of mitochondrial shape and protein biogenesis, and function in nonvesicular lipid trafficking between the ER and mitochondria. The MDM12-MMM1 subcomplex functions in the major beta-barrel assembly pathway that is responsible for biogenesis of all outer membrane beta-barrel proteins, and acts in a late step after the SAM complex. The MDM10-MDM12-MMM1 subcomplex further acts in the TOM40-specific pathway after the action of the MDM12-MMM1 complex. Essential for establishing and maintaining the structure of mitochondria and maintenance of mtDNA nucleoids. This Clavispora lusitaniae (strain ATCC 42720) (Yeast) protein is Maintenance of mitochondrial morphology protein 1.